A 252-amino-acid polypeptide reads, in one-letter code: Uracil-DNA glycosylase (252 aa).

D87 (proton acceptor) is an active-site residue.

It belongs to the uracil-DNA glycosylase (UDG) superfamily. UNG family.

The protein resides in the host nucleus. The enzyme catalyses Hydrolyzes single-stranded DNA or mismatched double-stranded DNA and polynucleotides, releasing free uracil.. In terms of biological role, excises uracil residues from the DNA which can arise as a result of misincorporation of dUMP residues by DNA polymerase or deamination of cytosines. Therefore may reduce deleterious uracil incorporation into the viral genome, particularly in terminally differentiated cells which lack DNA repair enzymes. The chain is Uracil-DNA glycosylase (46) from Alcelaphine herpesvirus 1 (strain C500) (AlHV-1).